A 533-amino-acid polypeptide reads, in one-letter code: Glucose-6-phosphate isomerase (533 aa).

The Proton donor role is filled by glutamate 341. Residues histidine 372 and lysine 501 contribute to the active site.

It belongs to the GPI family.

The protein resides in the cytoplasm. It catalyses the reaction alpha-D-glucose 6-phosphate = beta-D-fructose 6-phosphate. The protein operates within carbohydrate biosynthesis; gluconeogenesis. Its pathway is carbohydrate degradation; glycolysis; D-glyceraldehyde 3-phosphate and glycerone phosphate from D-glucose: step 2/4. Functionally, catalyzes the reversible isomerization of glucose-6-phosphate to fructose-6-phosphate. In Cereibacter sphaeroides (strain ATCC 17025 / ATH 2.4.3) (Rhodobacter sphaeroides), this protein is Glucose-6-phosphate isomerase.